The primary structure comprises 248 residues: Granulin (248 aa).

This sequence belongs to the polyhedrin family.

Functionally, component of the virus occlusion bodies, which are large proteinaceous structures, that protect the virus from the outside environment for extended periods until they are ingested by insect larvae. In Xestia c-nigrum granulosis virus (XnGV), this protein is Granulin.